Reading from the N-terminus, the 489-residue chain is Adenosylhomocysteinase (489 aa).

Residues Thr68, Asp151, and Glu213 each contribute to the substrate site. NAD(+) is bound at residue Thr214 to Thr216. Positions 243 and 247 each coordinate substrate. NAD(+) contacts are provided by residues Asn248, Gly277–Gly282, Glu300, Asn335, Ile356–His358, and Asn403.

The protein belongs to the adenosylhomocysteinase family. NAD(+) is required as a cofactor.

It is found in the cytoplasm. The enzyme catalyses S-adenosyl-L-homocysteine + H2O = L-homocysteine + adenosine. Its pathway is amino-acid biosynthesis; L-homocysteine biosynthesis; L-homocysteine from S-adenosyl-L-homocysteine: step 1/1. In terms of biological role, may play a key role in the regulation of the intracellular concentration of adenosylhomocysteine. This is Adenosylhomocysteinase from Mycobacterium sp. (strain JLS).